Here is a 387-residue protein sequence, read N- to C-terminus: Phosphoglycerate kinase (387 aa).

Residues Asp-21–Asn-23, Arg-36, His-59–Arg-62, Arg-113, and Arg-146 each bind substrate. Residues Lys-197, Glu-314, and Gly-340–Thr-343 contribute to the ATP site.

This sequence belongs to the phosphoglycerate kinase family. In terms of assembly, monomer.

The protein resides in the cytoplasm. The catalysed reaction is (2R)-3-phosphoglycerate + ATP = (2R)-3-phospho-glyceroyl phosphate + ADP. Its pathway is carbohydrate degradation; glycolysis; pyruvate from D-glyceraldehyde 3-phosphate: step 2/5. The protein is Phosphoglycerate kinase of Marinomonas sp. (strain MWYL1).